The primary structure comprises 661 residues: 1-deoxy-D-xylulose-5-phosphate synthase (661 aa).

Thiamine diphosphate is bound by residues H98 and 139-141; that span reads AHS. D170 is a Mg(2+) binding site. Thiamine diphosphate-binding positions include 171-172, N199, Y309, and E391; that span reads GA. N199 is a binding site for Mg(2+).

The protein belongs to the transketolase family. DXPS subfamily. Homodimer. Mg(2+) serves as cofactor. The cofactor is thiamine diphosphate.

It carries out the reaction D-glyceraldehyde 3-phosphate + pyruvate + H(+) = 1-deoxy-D-xylulose 5-phosphate + CO2. It participates in metabolic intermediate biosynthesis; 1-deoxy-D-xylulose 5-phosphate biosynthesis; 1-deoxy-D-xylulose 5-phosphate from D-glyceraldehyde 3-phosphate and pyruvate: step 1/1. Functionally, catalyzes the acyloin condensation reaction between C atoms 2 and 3 of pyruvate and glyceraldehyde 3-phosphate to yield 1-deoxy-D-xylulose-5-phosphate (DXP). The polypeptide is 1-deoxy-D-xylulose-5-phosphate synthase (Bradyrhizobium diazoefficiens (strain JCM 10833 / BCRC 13528 / IAM 13628 / NBRC 14792 / USDA 110)).